The following is a 379-amino-acid chain: Galactose-1-phosphate uridylyltransferase (379 aa).

The tract at residues 1 to 21 is disordered; it reads MSRSGTDPQQRQQASEADAAA. Low complexity predominate over residues 9-21; that stretch reads QQRQQASEADAAA. Residue cysteine 75 participates in Zn(2+) binding. UDP-alpha-D-glucose contacts are provided by residues alanine 81, 97–98, and asparagine 173; that span reads ND. Histidine 184 is a binding site for Zn(2+). Catalysis depends on histidine 186, which acts as the Tele-UMP-histidine intermediate. Glutamine 188 serves as a coordination point for UDP-alpha-D-glucose. Zn(2+)-binding residues include glutamate 202, histidine 301, histidine 319, and histidine 321. Residues 334–337 and 339–340 each bind UDP-alpha-D-glucose; these read KFMV and YE.

Belongs to the galactose-1-phosphate uridylyltransferase type 1 family. In terms of assembly, homodimer. Requires Zn(2+) as cofactor.

The catalysed reaction is alpha-D-galactose 1-phosphate + UDP-alpha-D-glucose = alpha-D-glucose 1-phosphate + UDP-alpha-D-galactose. It functions in the pathway carbohydrate metabolism; galactose metabolism. Its function is as follows. Plays an important role in galactose metabolism. This chain is Galactose-1-phosphate uridylyltransferase (GALT), found in Homo sapiens (Human).